Consider the following 647-residue polypeptide: Macrolide export ATP-binding/permease protein MacB (647 aa).

The 239-residue stretch at 5-243 (LELKGIERSY…TQTPSLTSKI (239 aa)) folds into the ABC transporter domain. 41–48 (GASGSGKS) is an ATP binding site. 4 helical membrane-spanning segments follow: residues 272 to 292 (LLTM…LVIG), 522 to 542 (LFLT…VMNI), 576 to 596 (ILVC…IAFI), and 610 to 630 (PIAL…FGFL).

It belongs to the ABC transporter superfamily. Macrolide exporter (TC 3.A.1.122) family. Homodimer. Part of the tripartite efflux system MacAB-TolC, which is composed of an inner membrane transporter, MacB, a periplasmic membrane fusion protein, MacA, and an outer membrane component, TolC. The complex forms a large protein conduit and can translocate molecules across both the inner and outer membranes. Interacts with MacA.

It localises to the cell inner membrane. Functionally, part of the tripartite efflux system MacAB-TolC. MacB is a non-canonical ABC transporter that contains transmembrane domains (TMD), which form a pore in the inner membrane, and an ATP-binding domain (NBD), which is responsible for energy generation. Confers resistance against macrolides. This chain is Macrolide export ATP-binding/permease protein MacB, found in Photorhabdus laumondii subsp. laumondii (strain DSM 15139 / CIP 105565 / TT01) (Photorhabdus luminescens subsp. laumondii).